Reading from the N-terminus, the 754-residue chain is Leucine-rich repeat-containing protein 36 (754 aa).

LRR repeat units follow at residues 51-72 and 73-94; these read NLRS…QYLC and SLQD…SRLQ. One can recognise an LRRCT domain in the interval 107 to 146; sequence NPVVRKDTDYRLFAVYTLQTLEKLDDRTVREGERKAAKLH. A compositionally biased stretch (basic and acidic residues) spans 241–255; it reads REMPSDNHQEDEFRH. The tract at residues 241-270 is disordered; the sequence is REMPSDNHQEDEFRHYSPRQSTVRSPEKMT. The stretch at 600-680 forms a coiled coil; sequence NDMESLKQKL…EKTVAILHES (81 aa). Residues 702 to 734 form a disordered region; it reads YSGKALLPPEKGHHLGRSSPFGKSTLSSSSPVA. The span at 722 to 732 shows a compositional bias: polar residues; it reads FGKSTLSSSSP.

The protein is Leucine-rich repeat-containing protein 36 (LRRC36) of Homo sapiens (Human).